Here is a 641-residue protein sequence, read N- to C-terminus: Soluble starch synthase 1, chloroplastic/amyloplastic (641 aa).

The N-terminal 113 residues, 1–113, are a transit peptide targeting the chloroplast; sequence MATAAGMGIG…DSIDKTIFVA (113 aa). The disordered stretch occupies residues 62–96; sequence TFLVPTSTPPAPTQSPAPAPTPPPLPDSGVGEIEP. Pro residues predominate over residues 68–87; it reads STPPAPTQSPAPAPTPPPLP. K147 contributes to the ADP-alpha-D-glucose binding site.

Belongs to the glycosyltransferase 1 family. Bacterial/plant glycogen synthase subfamily. As to expression, leaves and immature seeds.

Its subcellular location is the plastid. It is found in the chloroplast. It localises to the amyloplast. The enzyme catalyses [(1-&gt;4)-alpha-D-glucosyl](n) + ADP-alpha-D-glucose = [(1-&gt;4)-alpha-D-glucosyl](n+1) + ADP + H(+). It participates in glycan biosynthesis; starch biosynthesis. Its function is as follows. Involved in starch synthesis in endosperm amyloplasts. Plays a role in the elongation of amylopectin chains. Synthesizes preferentially amylopectin chains with a degree of polymerization (DP) of 7 to 11 by elongating chains with a DP of 4 to 7. Generates distincly chains with a DP of 8 to 12 chains from short chains with a DP of 6 to 7. The polypeptide is Soluble starch synthase 1, chloroplastic/amyloplastic (Oryza sativa subsp. japonica (Rice)).